The following is a 616-amino-acid chain: Proline--tRNA ligase (616 aa).

It belongs to the class-II aminoacyl-tRNA synthetase family. ProS type 1 subfamily. In terms of assembly, homodimer.

It localises to the cytoplasm. It catalyses the reaction tRNA(Pro) + L-proline + ATP = L-prolyl-tRNA(Pro) + AMP + diphosphate. Catalyzes the attachment of proline to tRNA(Pro) in a two-step reaction: proline is first activated by ATP to form Pro-AMP and then transferred to the acceptor end of tRNA(Pro). As ProRS can inadvertently accommodate and process non-cognate amino acids such as alanine and cysteine, to avoid such errors it has two additional distinct editing activities against alanine. One activity is designated as 'pretransfer' editing and involves the tRNA(Pro)-independent hydrolysis of activated Ala-AMP. The other activity is designated 'posttransfer' editing and involves deacylation of mischarged Ala-tRNA(Pro). The misacylated Cys-tRNA(Pro) is not edited by ProRS. The protein is Proline--tRNA ligase of Lactococcus lactis subsp. cremoris (strain SK11).